A 425-amino-acid polypeptide reads, in one-letter code: Serine--tRNA ligase (425 aa).

230–232 (TAE) provides a ligand contact to L-serine. 261–263 (RSE) contacts ATP. L-serine is bound at residue Glu284. Residue 348–351 (EISS) participates in ATP binding. Residue Ser384 participates in L-serine binding.

This sequence belongs to the class-II aminoacyl-tRNA synthetase family. Type-1 seryl-tRNA synthetase subfamily. In terms of assembly, homodimer. The tRNA molecule binds across the dimer.

It localises to the cytoplasm. The catalysed reaction is tRNA(Ser) + L-serine + ATP = L-seryl-tRNA(Ser) + AMP + diphosphate + H(+). It carries out the reaction tRNA(Sec) + L-serine + ATP = L-seryl-tRNA(Sec) + AMP + diphosphate + H(+). It participates in aminoacyl-tRNA biosynthesis; selenocysteinyl-tRNA(Sec) biosynthesis; L-seryl-tRNA(Sec) from L-serine and tRNA(Sec): step 1/1. In terms of biological role, catalyzes the attachment of serine to tRNA(Ser). Is also able to aminoacylate tRNA(Sec) with serine, to form the misacylated tRNA L-seryl-tRNA(Sec), which will be further converted into selenocysteinyl-tRNA(Sec). This Streptococcus pyogenes serotype M1 protein is Serine--tRNA ligase.